The following is a 574-amino-acid chain: Acyloxyacyl hydrolase (574 aa).

The N-terminal stretch at 1 to 22 (MKFPWKVFKTTLLLLLLSHSLA) is a signal peptide. The propeptide occupies 23–33 (SVPSEDQPGDS). In terms of domain architecture, Saposin B-type spans 36 to 117 (HGQSCLGCVV…YALEFCKRGA (82 aa)). The tract at residues 37 to 69 (GQSCLGCVVLVSVIEQLAEVHNSSVQVAMERLC) is important for enzyme activity, localization to cytoplasmic vesicles, and protein stability. Cystine bridges form between Cys-40/Cys-113, Cys-43/Cys-107, Cys-69/Cys-82, Cys-122/Cys-452, Cys-159/Cys-168, Cys-205/Cys-229, Cys-248/Cys-328, and Cys-375/Cys-458. Asn-58 carries N-linked (GlcNAc...) asparagine glycosylation. A lipopolysaccharide binding region spans residues 172 to 176 (ELSIK). 15 residues coordinate Ca(2+): Asp-183, Asp-185, Asp-187, His-189, Asp-204, Asn-206, Asp-207, Asp-209, Val-212, Asp-222, Asp-226, Asn-228, Asn-230, Ile-232, and Glu-244. Asn-206 carries N-linked (GlcNAc...) asparagine glycosylation. The active site involves Ser-262. N-linked (GlcNAc...) asparagine glycans are attached at residues Asn-408 and Asn-465.

In terms of assembly, heterodimer of the large and small subunits; disulfide-linked. It depends on Ca(2+) as a cofactor. Cleaved into a large and a small subunit. Post-translationally, the small subunit is N-glycosylated. As to expression, detected in peritoneal macrophages (at protein level). Strongly expressed in kidney cortex, where it may be produced by proximal tubule cells. In liver, expressed at high levels in Kupffer cells. Expressed by dendritic cells. Detected at low levels in alveolar macrophages.

It localises to the secreted. Its subcellular location is the cytoplasmic vesicle. It catalyses the reaction a 3-(acyloxy)acyl derivative of bacterial toxin + H2O = a 3-hydroxyacyl derivative of bacterial toxin + a fatty acid + H(+). Its function is as follows. Removes the secondary (acyloxyacyl-linked) fatty acyl chains from the lipid A region of bacterial lipopolysaccharides (LPS). By breaking down LPS, terminates the host response to bacterial infection and prevents prolonged and damaging inflammatory responses. In peritoneal macrophages, seems to be important for recovery from a state of immune tolerance following infection by Gram-negative bacteria. The sequence is that of Acyloxyacyl hydrolase from Mus musculus (Mouse).